The chain runs to 166 residues: Interferon gamma (166 aa).

The first 23 residues, 1–23 (MSYTTYFLAFQLCVTLCFSGSYC), serve as a signal peptide directing secretion. Pyrrolidone carboxylic acid is present on Gln-24. N-linked (GlcNAc...) asparagine glycans are attached at residues Asn-39 and Asn-106.

This sequence belongs to the type II (or gamma) interferon family. As to quaternary structure, homodimer. Interacts with IFNGR1 (via extracellular domain); this interaction promotes IFNGR1 dimerization. Released primarily from activated T lymphocytes.

Its subcellular location is the secreted. Its function is as follows. Type II interferon produced by immune cells such as T-cells and NK cells that plays crucial roles in antimicrobial, antiviral, and antitumor responses by activating effector immune cells and enhancing antigen presentation. Primarily signals through the JAK-STAT pathway after interaction with its receptor IFNGR1 to affect gene regulation. Upon IFNG binding, IFNGR1 intracellular domain opens out to allow association of downstream signaling components JAK2, JAK1 and STAT1, leading to STAT1 activation, nuclear translocation and transcription of IFNG-regulated genes. Many of the induced genes are transcription factors such as IRF1 that are able to further drive regulation of a next wave of transcription. Plays a role in class I antigen presentation pathway by inducing a replacement of catalytic proteasome subunits with immunoproteasome subunits. In turn, increases the quantity, quality, and repertoire of peptides for class I MHC loading. Increases the efficiency of peptide generation also by inducing the expression of activator PA28 that associates with the proteasome and alters its proteolytic cleavage preference. Up-regulates as well MHC II complexes on the cell surface by promoting expression of several key molecules such as cathepsins B/CTSB, H/CTSH, and L/CTSL. Participates in the regulation of hematopoietic stem cells during development and under homeostatic conditions by affecting their development, quiescence, and differentiation. The polypeptide is Interferon gamma (IFNG) (Sus scrofa (Pig)).